The primary structure comprises 133 residues: Small ribosomal subunit protein uS8 (133 aa).

The protein belongs to the universal ribosomal protein uS8 family. In terms of assembly, part of the 30S ribosomal subunit. Contacts proteins S5 and S12.

Its function is as follows. One of the primary rRNA binding proteins, it binds directly to 16S rRNA central domain where it helps coordinate assembly of the platform of the 30S subunit. This is Small ribosomal subunit protein uS8 from Syntrophus aciditrophicus (strain SB).